The sequence spans 1097 residues: DNA-directed RNA polymerase subunit beta (1097 aa).

Residues 1071-1097 (MQDVNPKRNTPSRPTYESLGTSEYAED) form a disordered region. Polar residues predominate over residues 1077–1091 (KRNTPSRPTYESLGT).

It belongs to the RNA polymerase beta chain family. In cyanobacteria the RNAP catalytic core is composed of 2 alpha, 1 beta, 1 beta', 1 gamma and 1 omega subunit. When a sigma factor is associated with the core the holoenzyme is formed, which can initiate transcription.

The enzyme catalyses RNA(n) + a ribonucleoside 5'-triphosphate = RNA(n+1) + diphosphate. Its function is as follows. DNA-dependent RNA polymerase catalyzes the transcription of DNA into RNA using the four ribonucleoside triphosphates as substrates. The sequence is that of DNA-directed RNA polymerase subunit beta from Prochlorococcus marinus subsp. pastoris (strain CCMP1986 / NIES-2087 / MED4).